We begin with the raw amino-acid sequence, 216 residues long: Thiopurine S-methyltransferase (216 aa).

S-adenosyl-L-methionine contacts are provided by Trp-10, Leu-45, Glu-66, and Arg-123.

This sequence belongs to the class I-like SAM-binding methyltransferase superfamily. TPMT family.

The protein localises to the cytoplasm. The enzyme catalyses S-adenosyl-L-methionine + a thiopurine = S-adenosyl-L-homocysteine + a thiopurine S-methylether.. The sequence is that of Thiopurine S-methyltransferase from Pseudomonas putida (strain ATCC 47054 / DSM 6125 / CFBP 8728 / NCIMB 11950 / KT2440).